Here is a 362-residue protein sequence, read N- to C-terminus: Beta-ketoacyl-[acyl-carrier-protein] synthase III 2 (362 aa).

Residues C113 and H251 contribute to the active site. Residues 252–256 (QANIR) are ACP-binding. Residue N281 is part of the active site.

Belongs to the thiolase-like superfamily. FabH family. In terms of assembly, homodimer.

It is found in the cytoplasm. The catalysed reaction is malonyl-[ACP] + acetyl-CoA + H(+) = 3-oxobutanoyl-[ACP] + CO2 + CoA. Its pathway is lipid metabolism; fatty acid biosynthesis. Catalyzes the condensation reaction of fatty acid synthesis by the addition to an acyl acceptor of two carbons from malonyl-ACP. Catalyzes the first condensation reaction which initiates fatty acid synthesis and may therefore play a role in governing the total rate of fatty acid production. Possesses both acetoacetyl-ACP synthase and acetyl transacylase activities. Its substrate specificity determines the biosynthesis of branched-chain and/or straight-chain of fatty acids. The sequence is that of Beta-ketoacyl-[acyl-carrier-protein] synthase III 2 from Vibrio vulnificus (strain CMCP6).